Reading from the N-terminus, the 1419-residue chain is Multidrug resistance protein 1 (1419 aa).

The interval 1–37 (MGKEQKEKKDGNLSIKEEVEKELNKKSTAELFRKIKN) is r domain; regulates transporter activity. Topologically, residues 1-60 (MGKEQKEKKDGNLSIKEEVEKELNKKSTAELFRKIKNEKISFFLPFKCLPAQHRKLLFIS) are cytoplasmic. The ABC transmembrane type-1 1 domain occupies 58–345 (FISFVCAVLS…ILPNITEYMK (288 aa)). Residues 61–81 (FVCAVLSGGTLPFFISVFGVI) traverse the membrane as a helical segment. Over 82–90 (LKNMNLGDD) the chain is Vacuolar. Residues 91–111 (INPIILSLVSIGLVQFILSMI) form a helical membrane-spanning segment. Over 112-168 (SSYCMDVITSKILKTLKLEYLRSVFYQDGQFHDNNPGSKLRSDLDFYLEQVSSGIGT) the chain is Cytoplasmic. A helical membrane pass occupies residues 169–189 (KFITIFTYASSFLGLYIWSLI). The Vacuolar segment spans residues 190-191 (KN). The chain crosses the membrane as a helical span at residues 192–212 (ARLTLCITCVFPLIYVCGVIC). Residues 213–275 (NKKVKLNKKT…KYILKANFVE (63 aa)) are Cytoplasmic-facing. A helical membrane pass occupies residues 276–296 (ALHIGLINGLILVSYAFGFWY). Residues 297 to 316 (GTRIIINSATNQYPNNDFNG) lie on the Vacuolar side of the membrane. Residues 317-337 (ASVISILLGVLISMFMLTIIL) traverse the membrane as a helical segment. The Cytoplasmic segment spans residues 338-788 (PNITEYMKAL…YKEIFSYKKD (451 aa)). In terms of domain architecture, ABC transporter 1 spans 378-662 (IEFKNVRFHY…NNNNNNNNNK (285 aa)). Residues tyrosine 387, threonine 389, arginine 390, serine 415, cysteine 417, glycine 418, lysine 419, serine 420, threonine 421, glutamine 462, lysine 562, serine 564, glycine 566, and glutamine 567 each coordinate ATP. Glutamine 462 provides a ligand contact to Mg(2+). Disordered stretches follow at residues 639-665 (ERSD…KINN) and 697-752 (SSNK…TAEN). 2 stretches are compositionally biased toward low complexity: residues 643–665 (NNNN…KINN) and 697–715 (SSNK…NKSS). A compositionally biased stretch (polar residues) spans 723 to 749 (GNDADNMNSLSIHENENISNNRNCKNT). A helical membrane pass occupies residues 789–809 (VTIIFFSILVAGGLYPVFALL). In terms of domain architecture, ABC transmembrane type-1 2 spans 791–1083 (IIFFSILVAG…GSYAGKLMSL (293 aa)). The Vacuolar segment spans residues 810–829 (YARYVSTLFDFANLEYNSNK). Residues 830 to 850 (YSIYILLIAIAMFISETLKNY) form a helical membrane-spanning segment. Topologically, residues 851–907 (YNNKIGEKVEKTMKRRLFENILYQEMSFFDQDKNTPGVLSAHINRDVHLLKTGLVNN) are cytoplasmic. The next 2 helical transmembrane spans lie at 908 to 928 (IVIF…SFYF) and 929 to 949 (CPIV…VFAV). At 950–1032 (RARLTKSKEI…RIIVNAALWG (83 aa)) the chain is on the cytoplasmic side. A helical membrane pass occupies residues 1033-1053 (FSQSAQLFINSFAYWFGSFLI). The Vacuolar segment spans residues 1054-1057 (KRGT). A helical transmembrane segment spans residues 1058–1078 (ILVDDFMKSLFTFIFTGSYAG). Topologically, residues 1079-1419 (KLMSLKGDSE…IYKKYVKLAK (341 aa)) are cytoplasmic. The 291-residue stretch at 1126–1416 (VDIKDVNFRY…QDGIYKKYVK (291 aa)) folds into the ABC transporter 2 domain. The ATP site is built by tyrosine 1135, arginine 1138, threonine 1163, glycine 1164, glycine 1166, lysine 1167, serine 1168, threonine 1169, glutamine 1256, leucine 1312, serine 1313, glycine 1315, and glutamine 1316. Residue serine 1168 coordinates Mg(2+). Glutamine 1256 contributes to the Mg(2+) binding site.

Belongs to the ABC transporter superfamily. ABCB family. Multidrug resistance exporter (TC 3.A.1.201) subfamily.

The protein resides in the vacuole membrane. The catalysed reaction is ATP + H2O + xenobioticSide 1 = ADP + phosphate + xenobioticSide 2.. Its function is as follows. Energy-dependent efflux pump responsible for decreased drug accumulation in multidrug-resistant cells. Transports lumefantrine, mefloquine, chloroquine, quinine, quinidine, amodiaquine, piperaquine, dihydroartemisinin and quinacrine. The protein is Multidrug resistance protein 1 of Plasmodium falciparum (isolate 3D7).